The following is a 304-amino-acid chain: HTH-type transcriptional regulator TtuA (304 aa).

The 58-residue stretch at 1–58 (MELEQLKCFVAAAEELHFGRAAQKMGILPASLGRHLRLLEESLGTRLMSRTTRSVALT) folds into the HTH lysR-type domain. Residues 18–37 (FGRAAQKMGILPASLGRHLR) constitute a DNA-binding region (H-T-H motif).

It belongs to the LysR transcriptional regulatory family.

Functionally, transcriptional regulator of the ttuABCDE tartrate utilization operon. The protein is HTH-type transcriptional regulator TtuA (ttuA) of Agrobacterium vitis (Rhizobium vitis).